A 23-amino-acid chain; its full sequence is Elongation factor Tu (23 aa).

It belongs to the GTP-binding elongation factor family. EF-Tu/EF-1A subfamily. As to quaternary structure, monomer. In terms of processing, the N-terminus is blocked. Post-translationally, the C-terminus may be subjected to proteolysis.

It localises to the cytoplasm. This protein promotes the GTP-dependent binding of aminoacyl-tRNA to the A-site of ribosomes during protein biosynthesis. This Delftia acidovorans (Pseudomonas acidovorans) protein is Elongation factor Tu (tuf).